Reading from the N-terminus, the 967-residue chain is Leucine--tRNA ligase (967 aa).

Residues 43–53 (PYLSGHLHVGH) carry the 'HIGH' region motif. The short motif at 650 to 654 (KMSKS) is the 'KMSKS' region element. Lys653 is an ATP binding site.

Belongs to the class-I aminoacyl-tRNA synthetase family.

Its subcellular location is the cytoplasm. The enzyme catalyses tRNA(Leu) + L-leucine + ATP = L-leucyl-tRNA(Leu) + AMP + diphosphate. The chain is Leucine--tRNA ligase from Pyrococcus abyssi (strain GE5 / Orsay).